The chain runs to 332 residues: MHIAVIGAGINGISVAVNLLETLPGVKVTIFTHNVTPNTTGDVAAGLFRPYLVAEGDHRIKKWCRSTYNFLENFIATNPKHHKYGCCYLEVFELDTEPLEKTLFNEIVGNSRFLNEFELKRYPTAKYGLASTSIISEGKKILPYFYEKFKMLGGKIKVMQVKNFDEVQMIHNFPIVINCSGLGSRSLCNDMDIYPVRGQIIRIHAPWIKYSFNKAEHYIIPQSDGVVVLGGTTQENNWNTLPDENDTKNILNGCKTILNGLEECNILSVNVGLRPGRKSVRLEKENRTNFTTGNKYTIIHNYGHGGSGFTLFWGCAKDVGQLVSDILLKAKL.

The FAD site is built by Ala8, Gly9, Ile10, Thr39, Thr40, Ala45, Gly46, Leu47, Val161, and Ser180. Tyr218 and Arg274 together coordinate D-proline. D-serine-binding residues include Tyr218 and Arg274. FAD is bound by residues Arg274, Gly305, Gly306, Gly308, and Thr310. Position 306 (Gly306) interacts with D-proline. Gly306 contacts D-serine. The Microbody targeting signal signature appears at 330 to 332 (AKL).

Belongs to the DAMOX/DASOX family. FAD is required as a cofactor.

Its subcellular location is the peroxisome matrix. The enzyme catalyses a D-alpha-amino acid + O2 + H2O = a 2-oxocarboxylate + H2O2 + NH4(+). The catalysed reaction is D-alanine + O2 + H2O = pyruvate + H2O2 + NH4(+). It carries out the reaction D-arginine + O2 + H2O = 5-guanidino-2-oxopentanoate + H2O2 + NH4(+). It catalyses the reaction D-asparagine + O2 + H2O = 2-oxosuccinamate + H2O2 + NH4(+). The enzyme catalyses D-cysteine + O2 + H2O = 2-oxo-3-sulfanylpropanoate + H2O2 + NH4(+). The catalysed reaction is D-glutamine + O2 + H2O = 2-oxoglutaramate + H2O2 + NH4(+). It carries out the reaction D-isoleucine + O2 + H2O = (R)-3-methyl-2-oxopentanoate + H2O2 + NH4(+). It catalyses the reaction D-leucine + O2 + H2O = 4-methyl-2-oxopentanoate + H2O2 + NH4(+). The enzyme catalyses D-lysine + O2 + H2O = 6-amino-2-oxohexanoate + H2O2 + NH4(+). The catalysed reaction is D-methionine + O2 + H2O = 4-methylsulfanyl-2-oxobutanoate + H2O2 + NH4(+). It carries out the reaction D-phenylalanine + O2 + H2O = 3-phenylpyruvate + H2O2 + NH4(+). It catalyses the reaction D-proline + O2 = 1-pyrroline-2-carboxylate + H2O2. The enzyme catalyses D-valine + O2 + H2O = 3-methyl-2-oxobutanoate + H2O2 + NH4(+). The catalysed reaction is D-histidine + O2 + H2O = 3-(imidazol-5-yl)pyruvate + H2O2 + NH4(+). It carries out the reaction D-tyrosine + O2 + H2O = 3-(4-hydroxyphenyl)pyruvate + H2O2 + NH4(+). It catalyses the reaction D-serine + O2 + H2O = 3-hydroxypyruvate + H2O2 + NH4(+). The enzyme catalyses D-threonine + O2 + H2O = (S)-3-hydroxy-2-oxobutanoate + H2O2 + NH4(+). The catalysed reaction is D-tryptophan + O2 + H2O = indole-3-pyruvate + H2O2 + NH4(+). Catalyzes the oxidative deamination of D-amino acids with broad substrate specificity. Could be responsible for the degradation of diet-derived D-alanine in the intestine. Maintains the asexual state of worms and represses early ovarian development. Following sexual induction, the enzyme is required for differentiation of oogonia into oocytes in the developing ovaries. This Dugesia ryukyuensis (Freshwater planarian flatworm) protein is D-amino acid oxidase.